The following is an 885-amino-acid chain: Dipeptidyl peptidase 9 (885 aa).

Active-site charge relay system residues include serine 752, aspartate 830, and histidine 862. A Val-boroPro-binding site is contributed by serine 752.

It belongs to the peptidase S9B family. DPPIV subfamily. Homodimer. Forms a ternary complex with NLRP1, composed of a DPP9 homodimer, one full-length NLRP1 protein, and one cleaved C-terminus of NLRP1 (NACHT, LRR and PYD domains-containing protein 1, C-terminus).

The protein localises to the nucleus. The catalysed reaction is Release of an N-terminal dipeptide, Xaa-Yaa-|-Zaa-, from a polypeptide, preferentially when Yaa is Pro, provided Zaa is neither Pro nor hydroxyproline.. Its function is as follows. Dipeptidyl peptidase that cleaves off N-terminal dipeptides from proteins having a Pro or Ala residue at position 2. Acts as a key inhibitor of the NLRP1 inflammasome. The polypeptide is Dipeptidyl peptidase 9 (Danio rerio (Zebrafish)).